A 501-amino-acid polypeptide reads, in one-letter code: Type II secretion system protein E (501 aa).

262–269 serves as a coordination point for ATP; that stretch reads GPTGSGKS. 4 residues coordinate Zn(2+): Cys395, Cys398, Cys428, and Cys431.

It belongs to the GSP E family. As to quaternary structure, forms homooligomers; most probably hexamers. Interacts with ExeL/GspL. It depends on Zn(2+) as a cofactor.

It is found in the cell inner membrane. It catalyses the reaction ATP + H2O + cellular proteinSide 1 = ADP + phosphate + cellular proteinSide 2.. Its function is as follows. ATPase component of the type II secretion system required for the energy-dependent secretion of extracellular factors such as proteases and toxins from the periplasm. Acts as a molecular motor to provide the energy that is required for assembly of the pseudopilus and the extrusion of substrates generated in the cytoplasm. This chain is Type II secretion system protein E (exeE), found in Aeromonas hydrophila.